We begin with the raw amino-acid sequence, 136 residues long: Small ribosomal subunit protein uS19 (136 aa).

The protein belongs to the universal ribosomal protein uS19 family.

Its function is as follows. Protein S19 forms a complex with S13 that binds strongly to the 16S ribosomal RNA. This is Small ribosomal subunit protein uS19 (rps19) from Methanothermobacter thermautotrophicus (strain ATCC 29096 / DSM 1053 / JCM 10044 / NBRC 100330 / Delta H) (Methanobacterium thermoautotrophicum).